The following is a 222-amino-acid chain: 6,7-dimethyl-8-ribityllumazine synthase, chloroplastic (222 aa).

The N-terminal 66 residues, 1-66 (MASFAASQTC…NRASFVVTNA (66 aa)), are a transit peptide targeting the chloroplast. 5-amino-6-(D-ribitylamino)uracil is bound by residues phenylalanine 89, 122–124 (AYE), and 146–148 (AVV). 151 to 152 (DT) provides a ligand contact to (2S)-2-hydroxy-3-oxobutyl phosphate. Histidine 154 acts as the Proton donor in catalysis. Residue phenylalanine 179 participates in 5-amino-6-(D-ribitylamino)uracil binding. Arginine 193 serves as a coordination point for (2S)-2-hydroxy-3-oxobutyl phosphate.

This sequence belongs to the DMRL synthase family. Oligomer forming an icosahedral capsid.

It is found in the plastid. The protein resides in the chloroplast. It catalyses the reaction (2S)-2-hydroxy-3-oxobutyl phosphate + 5-amino-6-(D-ribitylamino)uracil = 6,7-dimethyl-8-(1-D-ribityl)lumazine + phosphate + 2 H2O + H(+). It functions in the pathway cofactor biosynthesis; riboflavin biosynthesis; riboflavin from 2-hydroxy-3-oxobutyl phosphate and 5-amino-6-(D-ribitylamino)uracil: step 1/2. Its function is as follows. Catalyzes the formation of 6,7-dimethyl-8-ribityllumazine by condensation of 5-amino-6-(D-ribitylamino)uracil with 3,4-dihydroxy-2-butanone 4-phosphate. This is the penultimate step in the biosynthesis of riboflavin. The protein is 6,7-dimethyl-8-ribityllumazine synthase, chloroplastic of Spinacia oleracea (Spinach).